Consider the following 72-residue polypeptide: UPF0270 protein YheU (72 aa).

It belongs to the UPF0270 family.

This Escherichia fergusonii (strain ATCC 35469 / DSM 13698 / CCUG 18766 / IAM 14443 / JCM 21226 / LMG 7866 / NBRC 102419 / NCTC 12128 / CDC 0568-73) protein is UPF0270 protein YheU.